The chain runs to 351 residues: uncharacterized protein (351 aa).

5 residues coordinate Mn(2+): Asp215, Asp226, His290, Glu319, and Glu333.

The protein belongs to the peptidase M24B family. The cofactor is Mn(2+).

This is an uncharacterized protein from Staphylococcus haemolyticus (strain JCSC1435).